The primary structure comprises 660 residues: Bifunctional polymyxin resistance protein ArnA (660 aa).

Residues 1–304 are formyltransferase ArnAFT; it reads MKAVIFAYHD…TLGLVAGARL (304 aa). His-104 functions as the Proton donor; for formyltransferase activity in the catalytic mechanism. (6R)-10-formyltetrahydrofolate-binding positions include Arg-114 and 136–140; that span reads VKRAD. The tract at residues 314 to 660 is dehydrogenase ArnADH; that stretch reads RRIRVLILGV…RSVDIAERAS (347 aa). Residues Asp-347 and 368–369 each bind NAD(+); that span reads DI. UDP-alpha-D-glucuronate is bound by residues Ala-393, Tyr-398, and 432 to 433; that span reads TS. Glu-434 (proton acceptor; for decarboxylase activity) is an active-site residue. Residues Arg-460, Asn-492, 526–535, and Tyr-613 each bind UDP-alpha-D-glucuronate; that span reads KLIDGGQQKR. The active-site Proton donor; for decarboxylase activity is the Arg-619.

It in the N-terminal section; belongs to the Fmt family. UDP-L-Ara4N formyltransferase subfamily. In the C-terminal section; belongs to the NAD(P)-dependent epimerase/dehydratase family. UDP-glucuronic acid decarboxylase subfamily. As to quaternary structure, homohexamer, formed by a dimer of trimers.

It catalyses the reaction UDP-alpha-D-glucuronate + NAD(+) = UDP-beta-L-threo-pentopyranos-4-ulose + CO2 + NADH. It carries out the reaction UDP-4-amino-4-deoxy-beta-L-arabinose + (6R)-10-formyltetrahydrofolate = UDP-4-deoxy-4-formamido-beta-L-arabinose + (6S)-5,6,7,8-tetrahydrofolate + H(+). Its pathway is nucleotide-sugar biosynthesis; UDP-4-deoxy-4-formamido-beta-L-arabinose biosynthesis; UDP-4-deoxy-4-formamido-beta-L-arabinose from UDP-alpha-D-glucuronate: step 1/3. It participates in nucleotide-sugar biosynthesis; UDP-4-deoxy-4-formamido-beta-L-arabinose biosynthesis; UDP-4-deoxy-4-formamido-beta-L-arabinose from UDP-alpha-D-glucuronate: step 3/3. It functions in the pathway bacterial outer membrane biogenesis; lipopolysaccharide biosynthesis. Functionally, bifunctional enzyme that catalyzes the oxidative decarboxylation of UDP-glucuronic acid (UDP-GlcUA) to UDP-4-keto-arabinose (UDP-Ara4O) and the addition of a formyl group to UDP-4-amino-4-deoxy-L-arabinose (UDP-L-Ara4N) to form UDP-L-4-formamido-arabinose (UDP-L-Ara4FN). The modified arabinose is attached to lipid A and is required for resistance to polymyxin and cationic antimicrobial peptides. The polypeptide is Bifunctional polymyxin resistance protein ArnA (arnA) (Salmonella typhimurium (strain LT2 / SGSC1412 / ATCC 700720)).